The sequence spans 180 residues: Adenine phosphoribosyltransferase (180 aa).

Belongs to the purine/pyrimidine phosphoribosyltransferase family. In terms of assembly, homodimer.

It localises to the cytoplasm. It carries out the reaction AMP + diphosphate = 5-phospho-alpha-D-ribose 1-diphosphate + adenine. It participates in purine metabolism; AMP biosynthesis via salvage pathway; AMP from adenine: step 1/1. Functionally, catalyzes a salvage reaction resulting in the formation of AMP, that is energically less costly than de novo synthesis. This chain is Adenine phosphoribosyltransferase, found in Mannheimia succiniciproducens (strain KCTC 0769BP / MBEL55E).